The chain runs to 248 residues: Ubiquinone/menaquinone biosynthesis C-methyltransferase UbiE (248 aa).

S-adenosyl-L-methionine contacts are provided by Ser68 and Asp92.

Belongs to the class I-like SAM-binding methyltransferase superfamily. MenG/UbiE family.

It catalyses the reaction a 2-demethylmenaquinol + S-adenosyl-L-methionine = a menaquinol + S-adenosyl-L-homocysteine + H(+). The catalysed reaction is a 2-methoxy-6-(all-trans-polyprenyl)benzene-1,4-diol + S-adenosyl-L-methionine = a 5-methoxy-2-methyl-3-(all-trans-polyprenyl)benzene-1,4-diol + S-adenosyl-L-homocysteine + H(+). The protein operates within quinol/quinone metabolism; menaquinone biosynthesis; menaquinol from 1,4-dihydroxy-2-naphthoate: step 2/2. It functions in the pathway cofactor biosynthesis; ubiquinone biosynthesis. Methyltransferase required for the conversion of demethylmenaquinol (DMKH2) to menaquinol (MKH2) and the conversion of 2-polyprenyl-6-methoxy-1,4-benzoquinol (DDMQH2) to 2-polyprenyl-3-methyl-6-methoxy-1,4-benzoquinol (DMQH2). In Rickettsia massiliae (strain Mtu5), this protein is Ubiquinone/menaquinone biosynthesis C-methyltransferase UbiE.